The primary structure comprises 460 residues: MEIHLFNEIGKVTDGPFMVHVALSTYRFDLGQIDMLFIRSVFLHNKHISCWIRIPFNIRNVDVDLHRYFSFKPKRKNERTIILARPVVFFSLPLLSPGIDNNKLAVEAMCICRFVNTNGAEFFDLEFMYEDILREFPDVGDECIKEDDHVDDFFTLGACSSATVGTVQNSTGQDHRSPVNDNNEHTVTPGPLEPPSVVRGVDSNSGNGLNNMTPGKCNGYPTGKHVWKAIDIYRLQPLHTPSDNVYRVLYDKSSFLKPRISQPPYDGLASCFFLRHEVYRFMRVIGTEIIDKFFDVMNSEDGILFQKFLCHVPMNALDISIPEMVYLSQNVWTSHVDPRSCIIKGVVAHLFKNPRRPCFVGSLTENEYWVDVIDIRQNRIYYGQKIKLAVDQETNLLTCNDKSRRYEQRAGLSVLYINTDLCCIWSFTGGFAVEFRLTLEDIGNVDLIRAVFGAPSTLFE.

The interval 167–197 (VQNSTGQDHRSPVNDNNEHTVTPGPLEPPSV) is disordered. Residues 173–184 (QDHRSPVNDNNE) show a composition bias toward basic and acidic residues.

This sequence belongs to the herpesviridae CVC1 protein family. As to quaternary structure, interacts (via C-terminus) with capsid vertex component 2/CVC2.

The protein resides in the virion. It is found in the host nucleus. Its function is as follows. Capsid vertex-specific component that plays a role during viral DNA encapsidation, assuring correct genome cleavage and presumably stabilizing capsids that contain full-length viral genomes. This Elephantid herpesvirus 1 (isolate Asian elephant/Berlin/Kiba/1998) (EIHV-1) protein is Capsid vertex component 1.